Reading from the N-terminus, the 292-residue chain is RWD domain-containing protein 2A (292 aa).

The 121-residue stretch at 14-134 (LEMEMLFSMF…QWLQDNSASY (121 aa)) folds into the RWD domain.

The chain is RWD domain-containing protein 2A (RWDD2A) from Homo sapiens (Human).